The chain runs to 42 residues: MQYVKTYLSTAPVLAAIWFAILAGLLIEINRFFPDALILPYV.

Residues tyrosine 7 to isoleucine 27 traverse the membrane as a helical segment.

Belongs to the PsaJ family.

The protein localises to the plastid. It is found in the chloroplast thylakoid membrane. In terms of biological role, may help in the organization of the PsaE and PsaF subunits. This is Photosystem I reaction center subunit IX from Zygnema circumcarinatum (Green alga).